Consider the following 445-residue polypeptide: Cytoplasmic tRNA 2-thiolation protein 2 (445 aa).

Positions 1–11 (MCSIGEDDFGD) are enriched in acidic residues. The disordered stretch occupies residues 1–26 (MCSIGEDDFGDEGGVHAMKEESPLPE). Over residues 13-22 (GGVHAMKEES) the composition is skewed to basic and acidic residues.

It belongs to the CTU2/NCS2 family.

The protein resides in the cytoplasm. Its pathway is tRNA modification; 5-methoxycarbonylmethyl-2-thiouridine-tRNA biosynthesis. Its function is as follows. Plays a central role in 2-thiolation of mcm(5)S(2)U at tRNA wobble positions of tRNA(Lys), tRNA(Glu) and tRNA(Gln). May act by forming a heterodimer with NCS6/CTU1 that ligates sulfur from thiocarboxylated URM1 onto the uridine of tRNAs at wobble position. This is Cytoplasmic tRNA 2-thiolation protein 2 from Aedes aegypti (Yellowfever mosquito).